The sequence spans 673 residues: Annexin A6 (673 aa).

N-acetylalanine is present on alanine 2. Residue serine 13 is modified to Phosphoserine. 8 Annexin repeats span residues 20–91, 92–163, 175–247, 251–322, 363–434, 435–506, 521–595, and 599–670; these read FDPN…GLMR, PPAY…VLLQ, DLVQ…AVVK, STPE…KLSG, FNPD…GLMM, PPAH…SLAT, EDAQ…AIVQ, and NKPL…ALCG. Tyrosine 30 carries the phosphotyrosine modification. N6-acetyllysine occurs at positions 63, 68, 75, and 81. Residue tyrosine 201 is modified to Phosphotyrosine. 3 positions are modified to N6-acetyllysine: lysine 306, lysine 370, and lysine 418. The residue at position 422 (serine 422) is a Phosphoserine. Position 483 is an N6-acetyllysine (lysine 483). Position 537 is a phosphoserine (serine 537). An N6-acetyllysine modification is found at lysine 620.

It belongs to the annexin family. In terms of processing, phosphorylated in response to growth factor stimulation.

The protein resides in the cytoplasm. It localises to the melanosome. May associate with CD21. May regulate the release of Ca(2+) from intracellular stores. This Homo sapiens (Human) protein is Annexin A6 (ANXA6).